The primary structure comprises 461 residues: ERBB receptor feedback inhibitor 1 (461 aa).

N-acetylserine is present on Ser-2. Thr-126 and Thr-130 each carry phosphothreonine. Positions 228–353 (QNRVVPDPNP…VMPPTQSFAP (126 aa)) are disordered. Ser-251 and Ser-272 each carry phosphoserine. Polar residues predominate over residues 265–274 (SSCTHRASPS). Over residues 283-292 (PPRVPIPPRP) the composition is skewed to pro residues. Ser-301 carries the phosphoserine modification. Basic and acidic residues predominate over residues 311 to 324 (DEDRPPKVPPREPL). Over residues 325-336 (SRSNSRTPSPKS) the composition is skewed to polar residues. The interval 333-362 (SPKSLPSYLNGVMPPTQSFAPDPKYVSSKA) is interaction with EGFR and ERBB2 and regulation of EGFR activation. Ser-460 carries the phosphoserine modification.

This sequence belongs to the MIG6 family. Interacts with EGFR. Interacts with ERBB2. Detected in lung, in airway epithelial cells and alveolar type 2 cells (at protein level). Detected in uterus stroma, luminal epithelium and glandular epithelium.

Its subcellular location is the cytoplasm. The protein resides in the cell membrane. The protein localises to the nucleus. Functionally, negative regulator of EGFR signaling in skin morphogenesis. Acts as a negative regulator for several EGFR family members, including ERBB2, ERBB3 and ERBB4. Inhibits EGFR catalytic activity by interfering with its dimerization. Inhibits autophosphorylation of EGFR, ERBB2 and ERBB4. Important for normal keratinocyte proliferation and differentiation. Plays a role in modulating the response to steroid hormones in the uterus. Required for normal response to progesterone in the uterus and for fertility. Mediates epithelial estrogen responses in the uterus by regulating ESR1 levels and activation. Important for regulation of endometrium cell proliferation. Important for normal prenatal and perinatal lung development. The chain is ERBB receptor feedback inhibitor 1 (Errfi1) from Mus musculus (Mouse).